Consider the following 347-residue polypeptide: Dihydroorotase (347 aa).

Zn(2+)-binding residues include H17 and H19. Substrate is bound by residues H19 to R21 and N45. Residues K102, H139, and H177 each coordinate Zn(2+). At K102 the chain carries N6-carboxylysine. Residue H139 coordinates substrate. Position 222 (L222) interacts with substrate. Zn(2+) is bound at residue D250. D250 is an active-site residue. Residues H254 and A266 each coordinate substrate.

The protein belongs to the metallo-dependent hydrolases superfamily. DHOase family. Class II DHOase subfamily. As to quaternary structure, homodimer. Zn(2+) serves as cofactor.

The catalysed reaction is (S)-dihydroorotate + H2O = N-carbamoyl-L-aspartate + H(+). Its pathway is pyrimidine metabolism; UMP biosynthesis via de novo pathway; (S)-dihydroorotate from bicarbonate: step 3/3. Catalyzes the reversible cyclization of carbamoyl aspartate to dihydroorotate. The sequence is that of Dihydroorotase from Acidovorax sp. (strain JS42).